Reading from the N-terminus, the 317-residue chain is Cytochrome c biogenesis protein CcsA (317 aa).

A run of 8 helical transmembrane segments spans residues 17–37 (VVSIVITIHLINLLVNEIVGL), 44–64 (GMIVTLFCITGFLIIRWIYSG), 71–91 (LYESLIFLSWNFSIINMLPYL), 101–121 (ITSPSTLFIQGFATSGLLTQI), 143–163 (MILSYASLLCGSLLSIALLVI), 223–243 (IISIGFLFLTIGILSGAVWAN), 252–272 (WDPKETWAFITWTIFAIYLHI), and 284–304 (AIVASIGFLIIWICYFGINIL).

This sequence belongs to the CcmF/CycK/Ccl1/NrfE/CcsA family. May interact with Ccs1.

The protein resides in the plastid. The protein localises to the chloroplast thylakoid membrane. In terms of biological role, required during biogenesis of c-type cytochromes (cytochrome c6 and cytochrome f) at the step of heme attachment. In Pelargonium hortorum (Common geranium), this protein is Cytochrome c biogenesis protein CcsA.